A 197-amino-acid chain; its full sequence is Phosphoheptose isomerase (197 aa).

Positions 34 to 196 constitute an SIS domain; the sequence is MVHCLLGGNK…DRTLFPQDEQ (163 aa). A substrate-binding site is contributed by 49–51; it reads NGG. Positions 58 and 62 each coordinate Zn(2+). Substrate-binding positions include glutamate 62, 91–92, 117–119, serine 122, and glutamine 172; these read ND and STS. Positions 172 and 180 each coordinate Zn(2+).

Belongs to the SIS family. GmhA subfamily. In terms of assembly, homotetramer. The cofactor is Zn(2+).

Its subcellular location is the cytoplasm. It carries out the reaction 2 D-sedoheptulose 7-phosphate = D-glycero-alpha-D-manno-heptose 7-phosphate + D-glycero-beta-D-manno-heptose 7-phosphate. Its pathway is carbohydrate biosynthesis; D-glycero-D-manno-heptose 7-phosphate biosynthesis; D-glycero-alpha-D-manno-heptose 7-phosphate and D-glycero-beta-D-manno-heptose 7-phosphate from sedoheptulose 7-phosphate: step 1/1. Catalyzes the isomerization of sedoheptulose 7-phosphate in D-glycero-D-manno-heptose 7-phosphate. The sequence is that of Phosphoheptose isomerase from Shewanella sp. (strain W3-18-1).